Here is a 356-residue protein sequence, read N- to C-terminus: Cobalt-precorrin-5B C(1)-methyltransferase (356 aa).

Belongs to the CbiD family.

It carries out the reaction Co-precorrin-5B + S-adenosyl-L-methionine = Co-precorrin-6A + S-adenosyl-L-homocysteine. It participates in cofactor biosynthesis; adenosylcobalamin biosynthesis; cob(II)yrinate a,c-diamide from sirohydrochlorin (anaerobic route): step 6/10. Its function is as follows. Catalyzes the methylation of C-1 in cobalt-precorrin-5B to form cobalt-precorrin-6A. The protein is Cobalt-precorrin-5B C(1)-methyltransferase of Geobacter sp. (strain M21).